A 406-amino-acid polypeptide reads, in one-letter code: NAD(P)H-quinone oxidoreductase subunit H, organellar chromatophore (406 aa).

Belongs to the complex I 49 kDa subunit family. NDH is composed of at least 16 different subunits, 5 of which are encoded in the nucleus.

It is found in the plastid. The protein localises to the organellar chromatophore thylakoid membrane. It catalyses the reaction a quinone + NADH + H(+) = a quinol + NAD(+). Its function is as follows. NDH shuttles electrons from NAD(P)H:plastoquinone, via FMN and iron-sulfur (Fe-S) centers, to quinones in the photosynthetic chain and possibly in a chloroplast respiratory chain. The immediate electron acceptor for the enzyme in this species is believed to be plastoquinone. Couples the redox reaction to proton translocation, and thus conserves the redox energy in a proton gradient. This is NAD(P)H-quinone oxidoreductase subunit H, organellar chromatophore from Paulinella chromatophora.